We begin with the raw amino-acid sequence, 269 residues long: Protein shisa-1 (269 aa).

A signal peptide spans 1-18 (MEFIVLLTVCALLGLSCG). Residues 19 to 98 (QHGEYCHGWT…LPPTVPTYFP (80 aa)) lie on the Extracellular side of the membrane. A helical membrane pass occupies residues 99 to 119 (FLLVGSIFVSFVILGSLVGLC). Residues 120–269 (CCKCLKPEDD…TVCSGSPSKC (150 aa)) are Cytoplasmic-facing. The tract at residues 129–167 (DTQVSGPAPIQSRLLDQDPSTDTSRHSSSSSASMPRPPI) is disordered. Residues 146 to 162 (DPSTDTSRHSSSSSASM) are compositionally biased toward low complexity.

Belongs to the shisa family. As to quaternary structure, interacts with immature forms of fzd8 and fgfr.

The protein localises to the endoplasmic reticulum. It localises to the membrane. In terms of biological role, required for head formation during gastrulation. Functions as an inhibitor for the caudalizing signals wnt and fgf, does not inhibit bmp, activin and nodal signaling in head formation process. Induces retention of fzd8 in the endoplasmic reticulum and inhibits trafficking of fzd8 to the cell surface. The polypeptide is Protein shisa-1 (shisa1) (Xenopus laevis (African clawed frog)).